The primary structure comprises 527 residues: Benzoate--CoA ligase (527 aa).

The protein belongs to the ATP-dependent AMP-binding enzyme family. Benzoate-CoA ligase subfamily. As to quaternary structure, monomer.

The catalysed reaction is benzoate + ATP + CoA = benzoyl-CoA + AMP + diphosphate. Its function is as follows. Catalyzes the ligation of benzoate and CoA to form benzoyl-CoA at the expense of ATP. The enzyme also ligates 2-aminobenzoate and CoA. The enzyme shows activity toward a number of benzoate derivatives. This Thauera aromatica protein is Benzoate--CoA ligase (bclA).